The following is a 125-amino-acid chain: Secretion system apparatus protein SsaO (125 aa).

The sequence is that of Secretion system apparatus protein SsaO (ssaO) from Salmonella typhimurium (strain LT2 / SGSC1412 / ATCC 700720).